A 519-amino-acid polypeptide reads, in one-letter code: Putative cysteine ligase BshC (519 aa).

2 coiled-coil regions span residues 51–71 (LNAL…SLKE) and 440–464 (TKLN…HEQA).

Belongs to the BshC family.

In terms of biological role, involved in bacillithiol (BSH) biosynthesis. May catalyze the last step of the pathway, the addition of cysteine to glucosamine malate (GlcN-Mal) to generate BSH. This chain is Putative cysteine ligase BshC, found in Exiguobacterium sibiricum (strain DSM 17290 / CCUG 55495 / CIP 109462 / JCM 13490 / 255-15).